The following is a 368-amino-acid chain: Probable magnesium transporter (368 aa).

The Extracellular portion of the chain corresponds to 1-4 (MEDK). Residues 5–25 (YIGLALAMSSSLAIGTSFIIT) form a helical membrane-spanning segment. Over 26–50 (KKGLMDASARTGGTDGVQASDYLQN) the chain is Cytoplasmic. The chain crosses the membrane as a helical span at residues 51–71 (PIWWGGMITMAIGEIANFAAY). Over 72-76 (TFAPA) the chain is Extracellular. The chain crosses the membrane as a helical span at residues 77–97 (ILVTPLGALSVIIGAVLAAIF). Residues 98–101 (LKER) are Cytoplasmic-facing. A helical membrane pass occupies residues 102–122 (LGTLGKMGCAICLMGSVIIIL). The Extracellular portion of the chain corresponds to 123 to 143 (HAPPDKEVQTVDEILGYATQP). Residues 144–164 (GFMFYCTVVTLYSLFMIYKIV) form a helical membrane-spanning segment. Residues 165-175 (PKYGNTNPMIY) are Cytoplasmic-facing. Residues 176–196 (LSICSSVGSISVMSIKAFGIA) form a helical membrane-spanning segment. Residues 197–206 (LKLTLGGNNQ) are Extracellular-facing. Residues 207-227 (FTHVSTYLFLIVVALCIVTQM) form a helical membrane-spanning segment. The Cytoplasmic portion of the chain corresponds to 228-240 (NYFNKALDQFDTS). Residues 241 to 261 (IVNPLYYVTFTTFTLAASFIL) traverse the membrane as a helical segment. At 262 to 269 (FKGFNTSS) the chain is on the extracellular side. Asparagine 266 carries N-linked (GlcNAc...) asparagine glycosylation. The chain crosses the membrane as a helical span at residues 270–290 (AVDIISLLIGFLIIFSGVYLL). Topologically, residues 291–368 (NISRSESPMV…GDEDTRNYRH (78 aa)) are cytoplasmic.

This sequence belongs to the NIPA family.

It is found in the cell membrane. Its subcellular location is the early endosome. The catalysed reaction is Mg(2+)(in) = Mg(2+)(out). In terms of biological role, probably acts as a selective Mg(2+) transporter. Plays a role in cell wall integrity and in engulfment by host macrophages. The protein is Probable magnesium transporter of Candida albicans (strain SC5314 / ATCC MYA-2876) (Yeast).